A 552-amino-acid chain; its full sequence is Cholesterol oxidase (552 aa).

Positions 1-45 (MTDSRANRADATRGVASVSRRRFLAGAGLTAGAIALSSMSTSASA) form a signal peptide, tat-type signal. FAD is bound by residues Tyr-66, Gly-67, Glu-86, Gly-160, Asn-164, Gly-165, Met-167, and Val-295. Active-site proton acceptor residues include Glu-406 and His-492. FAD is bound by residues Gly-520 and Phe-532.

The protein belongs to the GMC oxidoreductase family. FAD is required as a cofactor. Predicted to be exported by the Tat system. The position of the signal peptide cleavage has been experimentally proven.

It localises to the secreted. The catalysed reaction is cholesterol + O2 = cholest-5-en-3-one + H2O2. It carries out the reaction cholest-5-en-3-one = cholest-4-en-3-one. It participates in steroid metabolism; cholesterol degradation. In terms of biological role, bifunctional enzyme that catalyzes the oxidation and isomerization of cholesterol to cholestenone (cholest-4-en-3-one), an initial step in the cholesterol degradation process. The protein is Cholesterol oxidase of Brevibacterium sterolicum.